Consider the following 475-residue polypeptide: Citrate synthase, mitochondrial (475 aa).

Catalysis depends on residues H310, H356, and D411.

The protein belongs to the citrate synthase family.

The protein resides in the mitochondrion matrix. The enzyme catalyses oxaloacetate + acetyl-CoA + H2O = citrate + CoA + H(+). It functions in the pathway carbohydrate metabolism; tricarboxylic acid cycle; isocitrate from oxaloacetate: step 1/2. This Aspergillus niger protein is Citrate synthase, mitochondrial (cit-1).